The primary structure comprises 394 residues: 8-amino-7-oxononanoate synthase (394 aa).

Arginine 21 is a binding site for substrate. 112–113 contacts pyridoxal 5'-phosphate; sequence GY. Residue histidine 137 participates in substrate binding. Pyridoxal 5'-phosphate is bound by residues serine 183, histidine 211, and threonine 239. Lysine 242 carries the post-translational modification N6-(pyridoxal phosphate)lysine. Residue threonine 358 participates in substrate binding.

This sequence belongs to the class-II pyridoxal-phosphate-dependent aminotransferase family. BioF subfamily. Homodimer. Requires pyridoxal 5'-phosphate as cofactor.

The catalysed reaction is 6-carboxyhexanoyl-[ACP] + L-alanine + H(+) = (8S)-8-amino-7-oxononanoate + holo-[ACP] + CO2. It participates in cofactor biosynthesis; biotin biosynthesis. In terms of biological role, catalyzes the decarboxylative condensation of pimeloyl-[acyl-carrier protein] and L-alanine to produce 8-amino-7-oxononanoate (AON), [acyl-carrier protein], and carbon dioxide. The polypeptide is 8-amino-7-oxononanoate synthase (Burkholderia pseudomallei (strain K96243)).